Here is a 118-residue protein sequence, read N- to C-terminus: Large ribosomal subunit protein bL17 (118 aa).

It belongs to the bacterial ribosomal protein bL17 family. As to quaternary structure, part of the 50S ribosomal subunit. Contacts protein L32.

The protein is Large ribosomal subunit protein bL17 of Onion yellows phytoplasma (strain OY-M).